The chain runs to 808 residues: Protein tortoise (808 aa).

A coiled-coil region spans residues 43–78 (KDRKELYSLNNDSIKKKLNQLKDETNQLLKERGEEL). The tract at residues 152-171 (LTSGGANKKKSPFLEDNNNK) is disordered. A coiled-coil region spans residues 694–733 (EDLDFQIEELELMIKNKKILEREIKAHNEKISKIIKDSRD).

Its subcellular location is the mitochondrion. Functionally, required for efficient chemotaxis. The protein is Protein tortoise (torA) of Dictyostelium discoideum (Social amoeba).